The sequence spans 315 residues: Glycerol-3-phosphate dehydrogenase [NAD(P)+] (315 aa).

Residues tryptophan 24, arginine 44, arginine 45, and lysine 92 each contribute to the NADPH site. Sn-glycerol 3-phosphate contacts are provided by lysine 92 and glycine 120. Serine 124 lines the NADPH pocket. Sn-glycerol 3-phosphate-binding residues include lysine 175, aspartate 228, serine 238, arginine 239, and asparagine 240. The active-site Proton acceptor is the lysine 175. Arginine 239 contributes to the NADPH binding site. NADPH is bound at residue glutamate 265.

It belongs to the NAD-dependent glycerol-3-phosphate dehydrogenase family.

Its subcellular location is the cytoplasm. The catalysed reaction is sn-glycerol 3-phosphate + NAD(+) = dihydroxyacetone phosphate + NADH + H(+). The enzyme catalyses sn-glycerol 3-phosphate + NADP(+) = dihydroxyacetone phosphate + NADPH + H(+). It functions in the pathway membrane lipid metabolism; glycerophospholipid metabolism. Functionally, catalyzes the reduction of the glycolytic intermediate dihydroxyacetone phosphate (DHAP) to sn-glycerol 3-phosphate (G3P), the key precursor for phospholipid synthesis. The chain is Glycerol-3-phosphate dehydrogenase [NAD(P)+] from Synechococcus sp. (strain JA-2-3B'a(2-13)) (Cyanobacteria bacterium Yellowstone B-Prime).